We begin with the raw amino-acid sequence, 308 residues long: Testis-specific Y-encoded protein 3 (308 aa).

This sequence belongs to the nucleosome assembly protein (NAP) family.

Its subcellular location is the cytoplasm. The protein localises to the nucleus. May be involved in sperm differentiation and proliferation. In Homo sapiens (Human), this protein is Testis-specific Y-encoded protein 3 (TSPY3).